Reading from the N-terminus, the 209-residue chain is Uracil phosphoribosyltransferase (209 aa).

5-phospho-alpha-D-ribose 1-diphosphate is bound by residues arginine 79, arginine 104, and 131 to 139 (DPMLATGGS). Residues isoleucine 194 and 199-201 (GDA) each bind uracil. Aspartate 200 provides a ligand contact to 5-phospho-alpha-D-ribose 1-diphosphate.

Belongs to the UPRTase family. Requires Mg(2+) as cofactor.

It carries out the reaction UMP + diphosphate = 5-phospho-alpha-D-ribose 1-diphosphate + uracil. Its pathway is pyrimidine metabolism; UMP biosynthesis via salvage pathway; UMP from uracil: step 1/1. Its activity is regulated as follows. Allosterically activated by GTP. Functionally, catalyzes the conversion of uracil and 5-phospho-alpha-D-ribose 1-diphosphate (PRPP) to UMP and diphosphate. The polypeptide is Uracil phosphoribosyltransferase (Anoxybacillus flavithermus (strain DSM 21510 / WK1)).